The following is a 302-amino-acid chain: tRNA dimethylallyltransferase (302 aa).

12-19 (GPTASGKS) serves as a coordination point for ATP. Position 14-19 (14-19 (TASGKS)) interacts with substrate. The tract at residues 37–40 (DSMQ) is interaction with substrate tRNA.

This sequence belongs to the IPP transferase family. In terms of assembly, monomer. It depends on Mg(2+) as a cofactor.

The catalysed reaction is adenosine(37) in tRNA + dimethylallyl diphosphate = N(6)-dimethylallyladenosine(37) in tRNA + diphosphate. In terms of biological role, catalyzes the transfer of a dimethylallyl group onto the adenine at position 37 in tRNAs that read codons beginning with uridine, leading to the formation of N6-(dimethylallyl)adenosine (i(6)A). This chain is tRNA dimethylallyltransferase, found in Corynebacterium diphtheriae (strain ATCC 700971 / NCTC 13129 / Biotype gravis).